Here is a 709-residue protein sequence, read N- to C-terminus: Fatty acid oxidation complex subunit alpha (709 aa).

An enoyl-CoA hydratase region spans residues Met1–Pro188. Positions Arg308–Phe709 are 3-hydroxyacyl-CoA dehydrogenase.

In the N-terminal section; belongs to the enoyl-CoA hydratase/isomerase family. It in the central section; belongs to the 3-hydroxyacyl-CoA dehydrogenase family. As to quaternary structure, heterotetramer of two alpha chains (FadJ) and two beta chains (FadI).

The protein resides in the cytoplasm. The catalysed reaction is a (3S)-3-hydroxyacyl-CoA = a (2E)-enoyl-CoA + H2O. It catalyses the reaction a 4-saturated-(3S)-3-hydroxyacyl-CoA = a (3E)-enoyl-CoA + H2O. The enzyme catalyses a (3S)-3-hydroxyacyl-CoA + NAD(+) = a 3-oxoacyl-CoA + NADH + H(+). It carries out the reaction (3S)-3-hydroxybutanoyl-CoA = (3R)-3-hydroxybutanoyl-CoA. The protein operates within lipid metabolism; fatty acid beta-oxidation. Its function is as follows. Catalyzes the formation of a hydroxyacyl-CoA by addition of water on enoyl-CoA. Also exhibits 3-hydroxyacyl-CoA epimerase and 3-hydroxyacyl-CoA dehydrogenase activities. The protein is Fatty acid oxidation complex subunit alpha of Shewanella sp. (strain MR-4).